The sequence spans 396 residues: Elongation factor Tu (396 aa).

One can recognise a tr-type G domain in the interval Lys-10–Glu-206. The segment at Gly-19–Thr-26 is G1. Gly-19 to Thr-26 contributes to the GTP binding site. Residue Thr-26 participates in Mg(2+) binding. The interval Gly-60–Asn-64 is G2. The G3 stretch occupies residues Asp-81–Gly-84. Residues Asp-81–His-85 and Asn-136–Asp-139 contribute to the GTP site. Positions Asn-136–Asp-139 are G4. The G5 stretch occupies residues Ser-174–Lys-176.

The protein belongs to the TRAFAC class translation factor GTPase superfamily. Classic translation factor GTPase family. EF-Tu/EF-1A subfamily. Monomer.

The protein localises to the cytoplasm. It carries out the reaction GTP + H2O = GDP + phosphate + H(+). In terms of biological role, GTP hydrolase that promotes the GTP-dependent binding of aminoacyl-tRNA to the A-site of ribosomes during protein biosynthesis. This chain is Elongation factor Tu, found in Burkholderia cenocepacia (strain HI2424).